A 198-amino-acid chain; its full sequence is Remorin (198 aa).

Residues 1-11 show a composition bias toward basic and acidic residues; that stretch reads MAELEAKKVEI. A disordered region spans residues 1 to 24; that stretch reads MAELEAKKVEIVDPAPPAPGPVEA. Residues 97–184 are a coiled coil; sequence EESEKSKAEN…LKAEELAAKY (88 aa).

This sequence belongs to the remorin family. Post-translationally, the N-terminus is blocked. In terms of processing, phosphorylated.

Its subcellular location is the cell membrane. Binds to both simple and complex galacturonides. May be involved in cell-to-cell signaling and molecular transport. In Solanum tuberosum (Potato), this protein is Remorin.